A 740-amino-acid chain; its full sequence is Eukaryotic translation initiation factor 3 subunit B (740 aa).

Over residues 1-10 (MAPSFDTLSE) the composition is skewed to polar residues. The tract at residues 1 to 20 (MAPSFDTLSEQDLHEEEEEE) is disordered. Residues 40 to 126 (TFVVIDGLPV…HTLLVNKLMD (87 aa)) enclose the RRM domain. WD repeat units follow at residues 193–230 (AHWTQLFVQWSPKGTYLASVHPQGVQLWGGPAFSKQKQ), 232–289 (PHPF…RSFV), 302–343 (EPKK…LLGK), 455–496 (SLKD…SFFA), 513–556 (IEKK…EKPE), and 571–609 (TEHYGVTDIDWDPTGRYVVSSASVWTHQLENGWNLHTFA). Positions 696-721 (AYGLPEEADDPKLAKDAAATTQEQGE) are disordered.

The protein belongs to the eIF-3 subunit B family. As to quaternary structure, component of the eukaryotic translation initiation factor 3 (eIF-3) complex.

It is found in the cytoplasm. RNA-binding component of the eukaryotic translation initiation factor 3 (eIF-3) complex, which is involved in protein synthesis of a specialized repertoire of mRNAs and, together with other initiation factors, stimulates binding of mRNA and methionyl-tRNAi to the 40S ribosome. The eIF-3 complex specifically targets and initiates translation of a subset of mRNAs involved in cell proliferation. This is Eukaryotic translation initiation factor 3 subunit B (prt1) from Aspergillus fumigatus (strain ATCC MYA-4609 / CBS 101355 / FGSC A1100 / Af293) (Neosartorya fumigata).